The chain runs to 183 residues: NADH-quinone oxidoreductase subunit A (183 aa).

The next 3 membrane-spanning stretches (helical) occupy residues 11 to 31 (IIAF…VPLL), 63 to 83 (FYLV…LYAW), and 98 to 118 (VVIF…VGAL). A disordered region spans residues 159–183 (TGQIPAQSSGRVKSKTTPALSSEKE).

It belongs to the complex I subunit 3 family. NDH-1 is composed of 14 different subunits. Subunits NuoA, H, J, K, L, M, N constitute the membrane sector of the complex.

It localises to the cell inner membrane. It carries out the reaction a quinone + NADH + 5 H(+)(in) = a quinol + NAD(+) + 4 H(+)(out). In terms of biological role, NDH-1 shuttles electrons from NADH, via FMN and iron-sulfur (Fe-S) centers, to quinones in the respiratory chain. The immediate electron acceptor for the enzyme in this species is believed to be ubiquinone. Couples the redox reaction to proton translocation (for every two electrons transferred, four hydrogen ions are translocated across the cytoplasmic membrane), and thus conserves the redox energy in a proton gradient. The chain is NADH-quinone oxidoreductase subunit A from Acinetobacter baumannii (strain ACICU).